The sequence spans 441 residues: Ribulose bisphosphate carboxylase large chain (441 aa).

Substrate-binding residues include N89 and T139. K141 functions as the Proton acceptor in the catalytic mechanism. Position 143 (K143) interacts with substrate. Mg(2+) contacts are provided by K167, D169, and E170. K167 carries the post-translational modification N6-carboxylysine. Residue H260 is the Proton acceptor of the active site. Substrate is bound by residues X261 and S345.

Belongs to the RuBisCO large chain family. Type I subfamily. Heterohexadecamer of 8 large chains and 8 small chains; disulfide-linked. The disulfide link is formed within the large subunit homodimers. Mg(2+) serves as cofactor. Post-translationally, the disulfide bond which can form in the large chain dimeric partners within the hexadecamer appears to be associated with oxidative stress and protein turnover.

The protein resides in the plastid. It localises to the chloroplast. The enzyme catalyses 2 (2R)-3-phosphoglycerate + 2 H(+) = D-ribulose 1,5-bisphosphate + CO2 + H2O. The catalysed reaction is D-ribulose 1,5-bisphosphate + O2 = 2-phosphoglycolate + (2R)-3-phosphoglycerate + 2 H(+). Its function is as follows. RuBisCO catalyzes two reactions: the carboxylation of D-ribulose 1,5-bisphosphate, the primary event in carbon dioxide fixation, as well as the oxidative fragmentation of the pentose substrate in the photorespiration process. Both reactions occur simultaneously and in competition at the same active site. The protein is Ribulose bisphosphate carboxylase large chain of Asclepias exaltata (Poke milkweed).